The sequence spans 315 residues: High mobility group protein hmg-12 (315 aa).

The segment at valine 57–aspartate 315 is disordered. The span at alanine 77–aspartate 86 shows a compositional bias: polar residues. Residues proline 118–lysine 128 constitute a DNA-binding region (a.T hook 1). Low complexity-rich tracts occupy residues alanine 147–alanine 160 and alanine 196–alanine 205.

The protein belongs to the HMGA family.

Its subcellular location is the nucleus. Functionally, transcriptional regulator. Binds to specific sequence motifs in regulatory elements. May recruit transcription factors, or may induce structural changes in chromatin, to thereby modulate embryonic expression of ATP-dependent chaperone cdc-48.1. The polypeptide is High mobility group protein hmg-12 (Caenorhabditis elegans).